Reading from the N-terminus, the 246-residue chain is Complement C1q subcomponent subunit C (246 aa).

The signal sequence occupies residues 1 to 29 (MVVGPSCQPPCGLCLLLLFLLALPLRSQA). The region spanning 32 to 113 (GCYGIPGMPG…GPPGEPGVEG (82 aa)) is the Collagen-like domain. Proline 37, proline 40, proline 43, proline 46, and proline 64 each carry 4-hydroxyproline. Positions 44-116 (GAPGKDGHDG…GEPGVEGRYK (73 aa)) are disordered. Residue lysine 76 is modified to 5-hydroxylysine. The O-linked (Gal...) hydroxylysine glycan is linked to lysine 76. Proline 82, proline 97, proline 100, and proline 106 each carry 4-hydroxyproline. Pro residues predominate over residues 99–108 (DPGPRGPPGE). The region spanning 116-246 (KQKHQSVFTV…VFSGFLLFPD (131 aa)) is the C1q domain. A disulfide bond links cysteine 180 and cysteine 194.

As to quaternary structure, core component of the complement C1 complex, a calcium-dependent complex composed of 1 molecule of the C1Q subcomplex, 2 molecules of C1R and 2 molecules of C1S. The C1Q subcomplex is composed 18 subunits: 3 chains of C1QA, C1QB, and C1QC trimerize to form 6 collagen-like triple helices connected to six globular ligand-recognition modules (C1q domain). In terms of processing, O-linked glycans consist of Glc-Gal disaccharides bound to the oxygen atom of post-translationally added hydroxyl groups.

Its subcellular location is the secreted. The protein resides in the cell surface. Its activity is regulated as follows. The C1Q subcomplex is inhibited by sulfated molecules, such as triterpenoid sulfates, heparan sulfate, or chondroitin sulfates. In terms of biological role, core component of the complement C1 complex, a multiprotein complex that initiates the classical pathway of the complement system, a cascade of proteins that leads to phagocytosis and breakdown of pathogens and signaling that strengthens the adaptive immune system. The classical complement pathway is initiated by the C1Q subcomplex of the C1 complex, which specifically binds IgG or IgM immunoglobulins complexed with antigens, forming antigen-antibody complexes on the surface of pathogens: C1QA, together with C1QB and C1QC, specifically recognizes and binds the Fc regions of IgG or IgM via its C1q domain. Immunoglobulin-binding activates the proenzyme C1R, which cleaves C1S, initiating the proteolytic cascade of the complement system. The C1Q subcomplex is activated by a hexamer of IgG complexed with antigens, while it is activated by a pentameric IgM. The C1Q subcomplex also recognizes and binds phosphatidylserine exposed on the surface of cells undergoing programmed cell death, possibly promoting activation of the complement system. The sequence is that of Complement C1q subcomponent subunit C from Mus musculus (Mouse).